The sequence spans 229 residues: Potassium/proton antiporter CemA (229 aa).

The next 3 membrane-spanning stretches (helical) occupy residues 7–27 (LNPL…SLSF), 106–126 (IILH…YSIL), and 189–209 (IISG…KYWI).

The protein belongs to the CemA family.

The protein localises to the plastid. It localises to the chloroplast inner membrane. It carries out the reaction K(+)(in) + H(+)(out) = K(+)(out) + H(+)(in). Functionally, contributes to K(+)/H(+) antiport activity by supporting proton efflux to control proton extrusion and homeostasis in chloroplasts in a light-dependent manner to modulate photosynthesis. Prevents excessive induction of non-photochemical quenching (NPQ) under continuous-light conditions. Indirectly promotes efficient inorganic carbon uptake into chloroplasts. This Nymphaea alba (White water-lily) protein is Potassium/proton antiporter CemA.